Consider the following 401-residue polypeptide: Tetracycline resistance protein, class B (401 aa).

The Cytoplasmic segment spans residues 1 to 6 (MNSSTK). A helical membrane pass occupies residues 7–30 (IALVITLLDAMGIGLIMPVLPTLL). The Periplasmic portion of the chain corresponds to 31–42 (REFIASEDIANH). Residues 43–61 (FGVLLALYALMQVIFAPWL) traverse the membrane as a helical segment. The Cytoplasmic portion of the chain corresponds to 62 to 71 (GKMSDRFGRR). Residues 72 to 91 (PVLLLSLIGASLDYLLLAFS) traverse the membrane as a helical segment. Residues 92–98 (SALWMLY) lie on the Periplasmic side of the membrane. A helical membrane pass occupies residues 99–119 (LGRLLSGITGATGAVAASVIA). The Cytoplasmic portion of the chain corresponds to 120 to 129 (DTTSASQRVK). The chain crosses the membrane as a helical span at residues 130-152 (WFGWLGASFGLGLIAGPIIGGFA). The Periplasmic segment spans residues 153-158 (GEISPH). The helical transmembrane segment at 159 to 178 (SPFFIAALLNIVTFLVVMFW) threads the bilayer. Topologically, residues 179-211 (FRETKNTRDNTDTEVGVETQSNSVYITLFKTMP) are cytoplasmic. A helical membrane pass occupies residues 212–232 (ILLIIYFSAQLIGQIPATVWV). Residues 233 to 243 (LFTENRFGWNS) are Periplasmic-facing. Residues 244 to 265 (MMVGFSLAGLGLLHSVFQAFVA) traverse the membrane as a helical segment. Over 266 to 275 (GRIATKWGEK) the chain is Cytoplasmic. Residues 276–295 (TAVLLGFIADSSAFAFLAFI) form a helical membrane-spanning segment. Topologically, residues 296 to 298 (SEG) are periplasmic. A helical membrane pass occupies residues 299-322 (WLVFPVLILLAGGGIALPALQGVM). The Cytoplasmic portion of the chain corresponds to 323–332 (SIQTKSHQQG). The chain crosses the membrane as a helical span at residues 333-356 (ALQGLLVSLTNATGVIGPLLFAVI). At 357 to 365 (YNHSLPIWD) the chain is on the periplasmic side. Residues 366-387 (GWIWIIGLAFYCIIILLSMTFM) form a helical membrane-spanning segment. Residues 388 to 401 (LTPQAQGSKQETSA) lie on the Cytoplasmic side of the membrane.

This sequence belongs to the major facilitator superfamily. TCR/Tet family.

The protein localises to the cell inner membrane. Functionally, resistance to tetracycline by an active tetracycline efflux. This is an energy-dependent process that decreases the accumulation of the antibiotic in whole cells. This protein functions as a metal-tetracycline/H(+) antiporter. In Escherichia coli, this protein is Tetracycline resistance protein, class B (tetA).